The chain runs to 261 residues: Glucosamine-6-phosphate deaminase (261 aa).

D67 serves as the catalytic Proton acceptor; for enolization step. D136 (for ring-opening step) is an active-site residue. H138 serves as the catalytic Proton acceptor; for ring-opening step. E143 (for ring-opening step) is an active-site residue.

This sequence belongs to the glucosamine/galactosamine-6-phosphate isomerase family. NagB subfamily.

The catalysed reaction is alpha-D-glucosamine 6-phosphate + H2O = beta-D-fructose 6-phosphate + NH4(+). Its pathway is amino-sugar metabolism; N-acetylneuraminate degradation; D-fructose 6-phosphate from N-acetylneuraminate: step 5/5. Functionally, catalyzes the reversible isomerization-deamination of glucosamine 6-phosphate (GlcN6P) to form fructose 6-phosphate (Fru6P) and ammonium ion. In Streptomyces coelicolor (strain ATCC BAA-471 / A3(2) / M145), this protein is Glucosamine-6-phosphate deaminase.